A 75-amino-acid polypeptide reads, in one-letter code: Large ribosomal subunit protein uL29 (75 aa).

This sequence belongs to the universal ribosomal protein uL29 family.

The protein is Large ribosomal subunit protein uL29 of Nostoc punctiforme (strain ATCC 29133 / PCC 73102).